A 1460-amino-acid polypeptide reads, in one-letter code: Probable outer membrane protein PmpC (1460 aa).

Residues 1–20 (MKFLSATAVFAAALPSITSA) form the signal peptide. 5 disordered regions span residues 21–48 (SSVE…FTEI), 92–212 (SEEN…PDKD), 279–372 (TPPA…ESGS), 455–549 (TPEE…DSSI), and 993–1021 (VDTS…TAQA). A compositionally biased stretch (low complexity) spans 34–44 (SSRTGSSSSQS). Residues 97–114 (QASFQDSAQNQTENASEG) show a composition bias toward polar residues. Positions 115–137 (NSPNSENTNQSSTTETESITTDE) are enriched in low complexity. Polar residues predominate over residues 138–155 (QVQNDNESAASVPTTVET). Positions 290–327 (NDPSGSNGNDGSDDSNSSGNTDSNESNPNNSASNNTGS) are enriched in low complexity. A compositionally biased stretch (polar residues) spans 328–358 (ENELSSSTPSAQLPNPATPFLSSVSTNSQPI). Positions 461–471 (LKSSQLNNQNP) are enriched in low complexity. Residues 487 to 501 (SLETSPITNQDSASS) are compositionally biased toward polar residues. Low complexity-rich tracts occupy residues 504-548 (AIFR…SDSS) and 995-1018 (TSTN…STPT). In terms of domain architecture, Autotransporter spans 1167–1460 (DEVAYNNLWI…MINCGARMTF (294 aa)).

The protein belongs to the PMP outer membrane protein family.

It localises to the secreted. The protein localises to the cell wall. The protein resides in the cell outer membrane. The chain is Probable outer membrane protein PmpC (pmpC) from Chlamydia muridarum (strain MoPn / Nigg).